Consider the following 641-residue polypeptide: FACT complex subunit SSRP1-A (641 aa).

The disordered stretch occupies residues 459 to 561 (TDDDAVDPHL…DPNAPKRAMT (103 aa)). Residues 476 to 487 (GDEESDEEDEDF) are compositionally biased toward acidic residues. Basic and acidic residues predominate over residues 512-524 (GGEKEKLSKKEAS). A DNA-binding region (HMG box) is located at residues 556-624 (PKRAMTPFMY…RYEKESAVYR (69 aa)).

This sequence belongs to the SSRP1 family. In terms of assembly, component of the FACT complex, a stable heterodimer of SPT16 and SSRP1.

The protein localises to the nucleus. It localises to the chromosome. Its function is as follows. Component of the FACT complex, a general chromatin factor that acts to reorganize nucleosomes. The FACT complex is involved in multiple processes that require DNA as a template such as mRNA elongation, DNA replication and DNA repair. During transcription elongation the FACT complex acts as a histone chaperone that both destabilizes and restores nucleosomal structure. It facilitates the passage of RNA polymerase II and transcription by promoting the dissociation of one histone H2A-H2B dimer from the nucleosome, then subsequently promotes the reestablishment of the nucleosome following the passage of RNA polymerase II. Binds specifically to double-stranded DNA. The polypeptide is FACT complex subunit SSRP1-A (SSRP1-A) (Oryza sativa subsp. japonica (Rice)).